The primary structure comprises 227 residues: Fibrillarin-like rRNA/tRNA 2'-O-methyltransferase (227 aa).

S-adenosyl-L-methionine contacts are provided by residues 86 to 87 (TT), 105 to 106 (EF), 130 to 131 (DA), and 150 to 153 (DVAQ).

It belongs to the methyltransferase superfamily. Fibrillarin family. Interacts with nop5. Component of box C/D small ribonucleoprotein (sRNP) particles that contain rpl7ae, FlpA and nop5, plus a guide RNA.

Functionally, involved in pre-rRNA and tRNA processing. Utilizes the methyl donor S-adenosyl-L-methionine to catalyze the site-specific 2'-hydroxyl methylation of ribose moieties in rRNA and tRNA. Site specificity is provided by a guide RNA that base pairs with the substrate. Methylation occurs at a characteristic distance from the sequence involved in base pairing with the guide RNA. The protein is Fibrillarin-like rRNA/tRNA 2'-O-methyltransferase of Pyrococcus abyssi (strain GE5 / Orsay).